The primary structure comprises 344 residues: tRNA N6-adenosine threonylcarbamoyltransferase (344 aa).

Residues His118 and His122 each coordinate Fe cation. Substrate-binding positions include 141-145, Asp174, Gly187, and Asn284; that span reads TASGG. Asp312 serves as a coordination point for Fe cation.

The protein belongs to the KAE1 / TsaD family. The cofactor is Fe(2+).

The protein resides in the cytoplasm. The catalysed reaction is L-threonylcarbamoyladenylate + adenosine(37) in tRNA = N(6)-L-threonylcarbamoyladenosine(37) in tRNA + AMP + H(+). Its function is as follows. Required for the formation of a threonylcarbamoyl group on adenosine at position 37 (t(6)A37) in tRNAs that read codons beginning with adenine. Is involved in the transfer of the threonylcarbamoyl moiety of threonylcarbamoyl-AMP (TC-AMP) to the N6 group of A37, together with TsaE and TsaB. TsaD likely plays a direct catalytic role in this reaction. The sequence is that of tRNA N6-adenosine threonylcarbamoyltransferase from Desulfotalea psychrophila (strain LSv54 / DSM 12343).